The following is a 698-amino-acid chain: Serotransferrin (698 aa).

A signal peptide spans 1–19 (MRLAVGALLVCAVLGLCLA). Transferrin-like domains lie at 25-347 (VRWC…NLRE) and 361-683 (VKWC…NLRK). 2 cysteine pairs are disulfide-bonded: Cys28/Cys67 and Cys38/Cys58. Arg42 carries the post-translational modification Dimethylated arginine. O-linked (GalNAc...) serine glycosylation occurs at Ser51. Residues Asp82 and Tyr114 each contribute to the Fe(3+) site. 17 disulfides stabilise this stretch: Cys137–Cys213, Cys156–Cys350, Cys177–Cys193, Cys180–Cys196, Cys190–Cys198, Cys246–Cys260, Cys358–Cys615, Cys364–Cys396, Cys374–Cys387, Cys421–Cys693, Cys437–Cys656, Cys469–Cys542, Cys493–Cys684, Cys503–Cys517, Cys514–Cys525, Cys582–Cys596, and Cys634–Cys639. 4 residues coordinate hydrogencarbonate: Thr139, Arg143, Ala145, and Gly146. Tyr207 provides a ligand contact to Fe(3+). His268 serves as a coordination point for Fe(3+). Ser389 is subject to Phosphoserine. 2 residues coordinate Fe(3+): Asp411 and Tyr445. 4 residues coordinate hydrogencarbonate: Thr471, Arg475, Ala477, and Gly478. Tyr536 is a Fe(3+) binding site. A Fe(3+)-binding site is contributed by His604. N-linked (GlcNAc...) asparagine glycosylation occurs at Asn630. At Ser685 the chain carries Phosphoserine.

It belongs to the transferrin family. In terms of assembly, monomer. Part of a complex composed of SLC40A1/ferroportin, TF/transferrin and HEPH/hephaestin that transfers iron from cells to transferrin. In terms of tissue distribution, expressed by the liver and secreted in plasma.

Its subcellular location is the secreted. Functionally, transferrins are iron binding transport proteins which can bind two Fe(3+) ions in association with the binding of an anion, usually bicarbonate. It is responsible for the transport of iron from sites of absorption and heme degradation to those of storage and utilization. Serum transferrin may also have a further role in stimulating cell proliferation. The sequence is that of Serotransferrin (TF) from Pan troglodytes (Chimpanzee).